A 206-amino-acid chain; its full sequence is Protein Nef (206 aa).

Residue Gly-2 is the site of N-myristoyl glycine; by host attachment. Ser-6 carries the post-translational modification Phosphoserine; by host. The tract at residues 62–65 (QNEE) is acidic; interacts with host PACS1 and PACS2; stabilizes the interaction of NEF/MHC-I with host AP1M1; necessary for MHC-I internalization. The tract at residues 69 to 78 (PVRPQVPLRP) is SH3-binding; interaction with Src family tyrosine kinases. The PxxP; stabilizes the interaction of NEF/MHC-I with host AP1M1; necessary for MHC-I internalization motif lies at 72–75 (PQVP). The tract at residues 108–124 (EILDLWVYHTQGFFPDW) is mediates dimerization, Nef-PTE1 interaction. Residues 148–180 (LEPEEVERANEGDNNILLHPICQHGQEDEAREV) are binding to ATP6V1H. A Dileucine internalization motif; necessary for CD4 internalization motif is present at residues 164 to 165 (LL). Positions 174–175 (ED) match the Diacidic; necessary for CD4 internalization motif.

Belongs to the lentivirus primate group Nef protein family. As to quaternary structure, monomer; cytosolic form. Homodimer; membrane bound form. Interacts with Nef associated p21-activated kinase (PAK2); this interaction activates PAK2. Associates with the Nef-MHC-I-AP1 complex; this complex is required for MHC-I internalization. Interacts (via C-terminus) with host PI3-kinase. Interacts with host PACS1; this interaction seems to be weak. Interacts with host PACS2. Interacts with host LCK and MAPK3; these interactions inhibit the kinase activity of the latter. Interacts with host ATP6V1H; this interaction may play a role in CD4 endocytosis. Associates with the CD4-Nef-AP2 complex; this complex is required for CD4 internalization. Interacts with host AP2 subunit alpha and AP2 subunit sigma2. Interacts with TCR-zeta chain; this interaction up-regulates the Fas ligand (FasL) surface expression. Interacts with host HCK, LYN, and SRC; these interactions activate the Src family kinases. Interacts with MAP3K5; this interaction inhibits the Fas and TNFR-mediated death signals. Interacts with beta-COP and PTE1. Interacts with human RACK1; this increases Nef phosphorylation by PKC. Interacts with TP53; this interaction decreases the half-life of TP53, protecting the infected cell against p53-mediated apoptosis. In terms of processing, the virion-associated Nef proteins are cleaved by the viral protease to release the soluble C-terminal core protein. Nef is probably cleaved concomitantly with viral structural proteins on maturation of virus particles. Myristoylated. Post-translationally, phosphorylated on serine residues, probably by host PKCdelta and theta.

It localises to the host cell membrane. Its subcellular location is the virion. The protein resides in the secreted. The protein localises to the host Golgi apparatus membrane. Its function is as follows. Factor of infectivity and pathogenicity, required for optimal virus replication. Alters numerous pathways of T-lymphocyte function and down-regulates immunity surface molecules in order to evade host defense and increase viral infectivity. Alters the functionality of other immunity cells, like dendritic cells, monocytes/macrophages and NK cells. In infected CD4(+) T-lymphocytes, down-regulates the surface MHC-I, mature MHC-II, CD4, CD28, CCR5 and CXCR4 molecules. Mediates internalization and degradation of host CD4 through the interaction of with the cytoplasmic tail of CD4, the recruitment of AP-2 (clathrin adapter protein complex 2), internalization through clathrin coated pits, and subsequent transport to endosomes and lysosomes for degradation. Diverts host MHC-I molecules to the trans-Golgi network-associated endosomal compartments by an endocytic pathway to finally target them for degradation. MHC-I down-regulation may involve AP-1 (clathrin adapter protein complex 1) or possibly Src family kinase-ZAP70/Syk-PI3K cascade recruited by PACS2. In consequence infected cells are masked for immune recognition by cytotoxic T-lymphocytes. Decreasing the number of immune receptors also prevents reinfection by more HIV particles (superinfection). Down-regulates host SERINC3 and SERINC5 thereby excluding these proteins from the viral particles. Virion infectivity is drastically higher when SERINC3 or SERINC5 are excluded from the viral envelope, because these host antiviral proteins impair the membrane fusion event necessary for subsequent virion penetration. Functionally, bypasses host T-cell signaling by inducing a transcriptional program nearly identical to that of anti-CD3 cell activation. Interaction with TCR-zeta chain up-regulates the Fas ligand (FasL). Increasing surface FasL molecules and decreasing surface MHC-I molecules on infected CD4(+) cells send attacking cytotoxic CD8+ T-lymphocytes into apoptosis. In terms of biological role, plays a role in optimizing the host cell environment for viral replication without causing cell death by apoptosis. Protects the infected cells from apoptosis in order to keep them alive until the next virus generation is ready to strike. Inhibits the Fas and TNFR-mediated death signals by blocking MAP3K5/ASK1. Decreases the half-life of TP53, protecting the infected cell against p53-mediated apoptosis. Inhibits the apoptotic signals regulated by the Bcl-2 family proteins through the formation of a Nef/PI3-kinase/PAK2 complex that leads to activation of PAK2 and induces phosphorylation of host BAD. Its function is as follows. Extracellular Nef protein targets CD4(+) T-lymphocytes for apoptosis by interacting with CXCR4 surface receptors. This chain is Protein Nef, found in Simian immunodeficiency virus (isolate MB66) (SIV-cpz).